A 114-amino-acid chain; its full sequence is Large ribosomal subunit protein uL22 (114 aa).

It belongs to the universal ribosomal protein uL22 family. Part of the 50S ribosomal subunit.

Its function is as follows. This protein binds specifically to 23S rRNA; its binding is stimulated by other ribosomal proteins, e.g. L4, L17, and L20. It is important during the early stages of 50S assembly. It makes multiple contacts with different domains of the 23S rRNA in the assembled 50S subunit and ribosome. Functionally, the globular domain of the protein is located near the polypeptide exit tunnel on the outside of the subunit, while an extended beta-hairpin is found that lines the wall of the exit tunnel in the center of the 70S ribosome. This chain is Large ribosomal subunit protein uL22, found in Streptococcus uberis (strain ATCC BAA-854 / 0140J).